The chain runs to 419 residues: DNA ligase (419 aa).

An NTD region spans residues 1–120 (MLNHFPGHCS…ARQKRGAHTN (120 aa)). An AD domain region spans residues 121-317 (RGMIPPMLVK…NYHSAHLAKL (197 aa)). Residue K151 is the N6-AMP-lysine intermediate of the active site. 3 residues coordinate ATP: K151, E203, and F232. E203 is an a divalent metal cation binding site. E291 contacts a divalent metal cation. 2 residues coordinate ATP: I294 and K316. Positions 318 to 419 (KPLLDAEFIL…REPINVLEII (102 aa)) are OB domain.

The protein belongs to the ATP-dependent DNA ligase family.

The protein resides in the virion. The enzyme catalyses ATP + (deoxyribonucleotide)n-3'-hydroxyl + 5'-phospho-(deoxyribonucleotide)m = (deoxyribonucleotide)n+m + AMP + diphosphate.. Functionally, very low-fidelity DNA ligase that seals nicks in double-stranded DNA during DNA repair. Together with the viral repair DNA polymerase X, fills the single nucleotide gaps generated by the AP endonuclease. It is not essential for viral replication and recombination. Displays a very low adenylation activity towards DNA with 3'-dideoxy- or 3'-amino-terminated nicks compared to regular nick DNA. The polypeptide is DNA ligase (African swine fever virus (isolate Tick/South Africa/Pretoriuskop Pr4/1996) (ASFV)).